A 319-amino-acid polypeptide reads, in one-letter code: Thioredoxin reductase (319 aa).

37–44 provides a ligand contact to FAD; that stretch reads ERGVPGGQ. Cys-136 and Cys-139 are disulfide-bonded. 279–288 serves as a coordination point for FAD; it reads DVRAKSLRQI.

It belongs to the class-II pyridine nucleotide-disulfide oxidoreductase family. Homodimer. It depends on FAD as a cofactor.

The protein resides in the cytoplasm. The enzyme catalyses [thioredoxin]-dithiol + NADP(+) = [thioredoxin]-disulfide + NADPH + H(+). The chain is Thioredoxin reductase (trxB) from Listeria monocytogenes serovar 1/2a (strain ATCC BAA-679 / EGD-e).